A 193-amino-acid polypeptide reads, in one-letter code: Deoxycytidylate deaminase (193 aa).

In terms of domain architecture, CMP/dCMP-type deaminase spans 1 to 171 (MKASTVLQIA…DILRNAGIEV (171 aa)). Zn(2+)-binding residues include Cys-19, Cys-49, His-94, Glu-102, and His-104. Catalysis depends on Glu-106, which acts as the Proton donor. 2 residues coordinate Zn(2+): Cys-132 and Cys-135. Tyr-153 is a substrate binding site.

This sequence belongs to the cytidine and deoxycytidylate deaminase family. As to quaternary structure, homohexamer. Zn(2+) serves as cofactor.

It carries out the reaction dCMP + H2O + H(+) = dUMP + NH4(+). Allosteric enzyme whose activity is greatly influenced by the end products of its metabolic pathway, dCTP and dTTP. Supplies the nucleotide substrate for thymidylate synthetase. This chain is Deoxycytidylate deaminase (CD), found in Escherichia coli (Bacteriophage T4).